The primary structure comprises 185 residues: 16S rRNA aminocarboxypropyltransferase (185 aa).

Residues T19, I69, L93, Y108, and T112 each coordinate S-adenosyl-L-methionine.

This sequence belongs to the TDD superfamily. TSR3 family.

The protein resides in the cytoplasm. It carries out the reaction an N(1)-methylpseudouridine in rRNA + S-adenosyl-L-methionine = N(1)-methyl-N(3)-[(3S)-3-amino-3-carboxypropyl]pseudouridine in rRNA + S-methyl-5'-thioadenosine + H(+). Functionally, aminocarboxypropyltransferase that catalyzes the aminocarboxypropyl transfer on pseudouridine corresponding to position 914 in M.jannaschii 16S rRNA. It constitutes the last step in biosynthesis of the hypermodified N1-methyl-N3-(3-amino-3-carboxypropyl) pseudouridine (m1acp3-Psi). The chain is 16S rRNA aminocarboxypropyltransferase from Vulcanisaeta distributa (strain DSM 14429 / JCM 11212 / NBRC 100878 / IC-017).